We begin with the raw amino-acid sequence, 92 residues long: YcgL domain-containing protein Sbal_1869 (92 aa).

Residues 1–85 enclose the YcgL domain; sequence MLCAVYKSSR…PQVNLLAEHK (85 aa).

The sequence is that of YcgL domain-containing protein Sbal_1869 from Shewanella baltica (strain OS155 / ATCC BAA-1091).